The chain runs to 225 residues: uncharacterized protein (225 aa).

The interval 1–48 is disordered; the sequence is MTQLVTRARSARGSTLGEQPRQDQLDFADHTGTAGDGNDGAAAASGPV. Basic and acidic residues predominate over residues 20–29; the sequence is PRQDQLDFAD. Residues 64-136 enclose the HTH merR-type domain; sequence GYRGPSACQI…LHNIRVAVDH (73 aa). Residues 201–225 form a disordered region; that stretch reads DGGESIAAPEDELASRRKHRDRKIG. The span at 216 to 225 shows a compositional bias: basic residues; that stretch reads RRKHRDRKIG.

This is an uncharacterized protein from Mycobacterium tuberculosis (strain CDC 1551 / Oshkosh).